Here is a 478-residue protein sequence, read N- to C-terminus: Sulfate adenylyltransferase subunit 1 (478 aa).

Residues 24-240 enclose the tr-type G domain; it reads KSMLRFLTCG…VLEDIDIDAD (217 aa). The segment at 33 to 40 is G1; that stretch reads GSVDDGKS. GTP is bound at residue 33–40; the sequence is GSVDDGKS. Residues 91–95 form a G2 region; that stretch reads GITID. The interval 112–115 is G3; it reads DTPG. Residues 112 to 116 and 167 to 170 each bind GTP; these read DTPGH and NKMD. Positions 167–170 are G4; the sequence is NKMD. Positions 206–208 are G5; the sequence is SAL.

It belongs to the TRAFAC class translation factor GTPase superfamily. Classic translation factor GTPase family. CysN/NodQ subfamily. Heterodimer composed of CysD, the smaller subunit, and CysN.

It carries out the reaction sulfate + ATP + H(+) = adenosine 5'-phosphosulfate + diphosphate. It participates in sulfur metabolism; hydrogen sulfide biosynthesis; sulfite from sulfate: step 1/3. In terms of biological role, with CysD forms the ATP sulfurylase (ATPS) that catalyzes the adenylation of sulfate producing adenosine 5'-phosphosulfate (APS) and diphosphate, the first enzymatic step in sulfur assimilation pathway. APS synthesis involves the formation of a high-energy phosphoric-sulfuric acid anhydride bond driven by GTP hydrolysis by CysN coupled to ATP hydrolysis by CysD. The chain is Sulfate adenylyltransferase subunit 1 from Aliivibrio salmonicida (strain LFI1238) (Vibrio salmonicida (strain LFI1238)).